The sequence spans 405 residues: L-carnitine CoA-transferase (405 aa).

Residues K97 and R104 each contribute to the CoA site. D169 functions as the Nucleophile in the catalytic mechanism.

It belongs to the CoA-transferase III family. CaiB subfamily. In terms of assembly, homodimer.

The protein localises to the cytoplasm. It catalyses the reaction crotonobetainyl-CoA + (R)-carnitine = crotonobetaine + (R)-carnitinyl-CoA. It carries out the reaction 4-(trimethylamino)butanoyl-CoA + (R)-carnitine = (R)-carnitinyl-CoA + 4-(trimethylamino)butanoate. Its pathway is amine and polyamine metabolism; carnitine metabolism. In terms of biological role, catalyzes the reversible transfer of the CoA moiety from gamma-butyrobetainyl-CoA to L-carnitine to generate L-carnitinyl-CoA and gamma-butyrobetaine. Is also able to catalyze the reversible transfer of the CoA moiety from gamma-butyrobetainyl-CoA or L-carnitinyl-CoA to crotonobetaine to generate crotonobetainyl-CoA. The protein is L-carnitine CoA-transferase of Shigella flexneri serotype 5b (strain 8401).